Consider the following 139-residue polypeptide: Large ribosomal subunit protein bL20 (139 aa).

The protein belongs to the bacterial ribosomal protein bL20 family.

In terms of biological role, binds directly to 23S ribosomal RNA and is necessary for the in vitro assembly process of the 50S ribosomal subunit. It is not involved in the protein synthesizing functions of that subunit. The protein is Large ribosomal subunit protein bL20 of Leuconostoc mesenteroides subsp. mesenteroides (strain ATCC 8293 / DSM 20343 / BCRC 11652 / CCM 1803 / JCM 6124 / NCDO 523 / NBRC 100496 / NCIMB 8023 / NCTC 12954 / NRRL B-1118 / 37Y).